Reading from the N-terminus, the 105-residue chain is Probable tetrachloroethene reductive dehalogenase membrane anchor protein (105 aa).

3 consecutive transmembrane segments (helical) span residues 3-23 (IYDV…QYGI), 35-55 (IPLQ…LAWG), and 66-86 (AIGM…IITY).

The protein belongs to the PceB family.

The protein resides in the cell membrane. Its function is as follows. May act as a membrane anchor for the tetrachloroethene reductive dehalogenase PceA. The chain is Probable tetrachloroethene reductive dehalogenase membrane anchor protein from Dehalobacter restrictus (strain DSM 9455 / PER-K23).